A 247-amino-acid chain; its full sequence is tRNA pseudouridine synthase A 1 (247 aa).

The active-site Nucleophile is Asp53. Tyr111 contacts substrate.

This sequence belongs to the tRNA pseudouridine synthase TruA family. Homodimer.

It carries out the reaction uridine(38/39/40) in tRNA = pseudouridine(38/39/40) in tRNA. Its function is as follows. Formation of pseudouridine at positions 38, 39 and 40 in the anticodon stem and loop of transfer RNAs. In Bacillus cereus (strain ZK / E33L), this protein is tRNA pseudouridine synthase A 1.